The sequence spans 463 residues: Phosphoglycerate transporter protein (463 aa).

Residues 1–29 (MLTILKTGQSAHKVPPEKVQATYGRYRIQ) are Cytoplasmic-facing. 12 helical membrane passes run 30–50 (ALLS…NFTL), 59–79 (LDLS…AYGI), 106–126 (IVNV…LVVF), 127–147 (NGLF…NWFP), 160–180 (ISHN…FAIL), 188–208 (ASYI…LVLG), 267–287 (VFVY…LLTV), 297–317 (VAFL…GWLS), 326–346 (MPLA…YWKS), 349–369 (LLMV…PQFL), 391–411 (GFMS…VMVD), and 413–433 (LGWY…ILFC).

The protein belongs to the major facilitator superfamily. Organophosphate:Pi antiporter (OPA) (TC 2.A.1.4) family.

The protein resides in the cell inner membrane. The phosphoglycerate transporter protein is a part of the PGT transport system. It is the membrane bound transporter for phosphoglycerate into salmonella. This chain is Phosphoglycerate transporter protein (pgtP), found in Salmonella typhimurium (strain LT2 / SGSC1412 / ATCC 700720).